The chain runs to 310 residues: Tagatose-6-phosphate kinase (310 aa).

Belongs to the carbohydrate kinase PfkB family. LacC subfamily.

It catalyses the reaction D-tagatofuranose 6-phosphate + ATP = D-tagatofuranose 1,6-bisphosphate + ADP + H(+). It functions in the pathway carbohydrate metabolism; D-tagatose 6-phosphate degradation; D-glyceraldehyde 3-phosphate and glycerone phosphate from D-tagatose 6-phosphate: step 1/2. This is Tagatose-6-phosphate kinase from Streptococcus agalactiae serotype V (strain ATCC BAA-611 / 2603 V/R).